Here is a 247-residue protein sequence, read N- to C-terminus: Carboxy-S-adenosyl-L-methionine synthase (247 aa).

S-adenosyl-L-methionine contacts are provided by residues tyrosine 39, 64–66, 89–90, 117–118, asparagine 132, and arginine 199; these read GCS, DN, and DI.

This sequence belongs to the class I-like SAM-binding methyltransferase superfamily. Cx-SAM synthase family. In terms of assembly, homodimer.

It carries out the reaction prephenate + S-adenosyl-L-methionine = carboxy-S-adenosyl-L-methionine + 3-phenylpyruvate + H2O. Catalyzes the conversion of S-adenosyl-L-methionine (SAM) to carboxy-S-adenosyl-L-methionine (Cx-SAM). This is Carboxy-S-adenosyl-L-methionine synthase from Escherichia coli (strain K12 / MC4100 / BW2952).